Here is a 174-residue protein sequence, read N- to C-terminus: Bifunctional protein PyrR (174 aa).

The short motif at 97–109 (VVIVDDVLYTGRT) is the PRPP-binding element.

This sequence belongs to the purine/pyrimidine phosphoribosyltransferase family. PyrR subfamily. In terms of assembly, homodimer and homohexamer; in equilibrium.

It carries out the reaction UMP + diphosphate = 5-phospho-alpha-D-ribose 1-diphosphate + uracil. Regulates transcriptional attenuation of the pyrimidine nucleotide (pyr) operon by binding in a uridine-dependent manner to specific sites on pyr mRNA. This disrupts an antiterminator hairpin in the RNA and favors formation of a downstream transcription terminator, leading to a reduced expression of downstream genes. Its function is as follows. Also displays a weak uracil phosphoribosyltransferase activity which is not physiologically significant. The sequence is that of Bifunctional protein PyrR from Macrococcus caseolyticus (strain JCSC5402) (Macrococcoides caseolyticum).